A 349-amino-acid polypeptide reads, in one-letter code: GTP 3',8-cyclase (349 aa).

In terms of domain architecture, Radical SAM core spans 26 to 245 (GFGRAVTYLR…SSFWTLTDIP (220 aa)). A GTP-binding site is contributed by arginine 35. The [4Fe-4S] cluster site is built by cysteine 42 and cysteine 46. Tyrosine 48 is a binding site for S-adenosyl-L-methionine. Cysteine 49 contacts [4Fe-4S] cluster. Arginine 84 contributes to the GTP binding site. Residue glycine 88 coordinates S-adenosyl-L-methionine. A GTP-binding site is contributed by threonine 118. Serine 142 contributes to the S-adenosyl-L-methionine binding site. Lysine 178 is a GTP binding site. Methionine 212 contributes to the S-adenosyl-L-methionine binding site. The [4Fe-4S] cluster site is built by cysteine 275 and cysteine 278. 280 to 282 (RVR) serves as a coordination point for GTP. Cysteine 292 is a [4Fe-4S] cluster binding site.

This sequence belongs to the radical SAM superfamily. MoaA family. In terms of assembly, monomer and homodimer. [4Fe-4S] cluster is required as a cofactor.

It catalyses the reaction GTP + AH2 + S-adenosyl-L-methionine = (8S)-3',8-cyclo-7,8-dihydroguanosine 5'-triphosphate + 5'-deoxyadenosine + L-methionine + A + H(+). It participates in cofactor biosynthesis; molybdopterin biosynthesis. Its function is as follows. Catalyzes the cyclization of GTP to (8S)-3',8-cyclo-7,8-dihydroguanosine 5'-triphosphate. The chain is GTP 3',8-cyclase from Caulobacter vibrioides (strain ATCC 19089 / CIP 103742 / CB 15) (Caulobacter crescentus).